Here is a 418-residue protein sequence, read N- to C-terminus: Tyrosine--tRNA ligase (418 aa).

Tyr-34 provides a ligand contact to L-tyrosine. The 'HIGH' region signature appears at 39 to 48 (PTGDSMHIGH). Residues Tyr-166 and Gln-170 each contribute to the L-tyrosine site. The 'KMSKS' region motif lies at 228–232 (KFGKT). Lys-231 contributes to the ATP binding site. Residues 350 to 418 (QNIVLWLVDA…KKRYFLAHVK (69 aa)) enclose the S4 RNA-binding domain.

Belongs to the class-I aminoacyl-tRNA synthetase family. TyrS type 1 subfamily. In terms of assembly, homodimer.

The protein resides in the cytoplasm. It catalyses the reaction tRNA(Tyr) + L-tyrosine + ATP = L-tyrosyl-tRNA(Tyr) + AMP + diphosphate + H(+). Functionally, catalyzes the attachment of tyrosine to tRNA(Tyr) in a two-step reaction: tyrosine is first activated by ATP to form Tyr-AMP and then transferred to the acceptor end of tRNA(Tyr). The chain is Tyrosine--tRNA ligase from Lactiplantibacillus plantarum (strain ATCC BAA-793 / NCIMB 8826 / WCFS1) (Lactobacillus plantarum).